A 64-amino-acid polypeptide reads, in one-letter code: Large ribosomal subunit protein bL35 (64 aa).

A disordered region spans residues 1–43; the sequence is MPKMKSKKSLAKRVIAKKNGTLKRGKAYRSHRATGKTTKQKRH.

The protein belongs to the bacterial ribosomal protein bL35 family.

This Mesoplasma florum (strain ATCC 33453 / NBRC 100688 / NCTC 11704 / L1) (Acholeplasma florum) protein is Large ribosomal subunit protein bL35.